The sequence spans 931 residues: Phosphoenolpyruvate carboxylase (931 aa).

Active-site residues include histidine 158 and lysine 593.

The protein belongs to the PEPCase type 1 family. It depends on Mg(2+) as a cofactor.

The catalysed reaction is oxaloacetate + phosphate = phosphoenolpyruvate + hydrogencarbonate. In terms of biological role, forms oxaloacetate, a four-carbon dicarboxylic acid source for the tricarboxylic acid cycle. The protein is Phosphoenolpyruvate carboxylase of Azorhizobium caulinodans (strain ATCC 43989 / DSM 5975 / JCM 20966 / LMG 6465 / NBRC 14845 / NCIMB 13405 / ORS 571).